We begin with the raw amino-acid sequence, 644 residues long: uncharacterized protein (644 aa).

Disordered stretches follow at residues 1 to 35 (MSSHDDDHTPLLISDPSVNKPFRSRTPSPEREYCS) and 48 to 106 (GNSH…SHHN). Ser28 carries the post-translational modification Phosphoserine. Low complexity predominate over residues 58–70 (NGASSSNNNVAKS). Positions 83–106 (YDSTSNSNEPISFNEPDSSNSHHN) are enriched in polar residues. The next 12 membrane-spanning stretches (helical) occupy residues 131 to 151 (ILPLNFINAFSWGMIEIPLLF), 190 to 210 (AAFGSLAAFLGLFSTAYYGTM), 218 to 238 (LVLFITVSFLLLGDLWLLYQS), 245 to 265 (YFVLFAAALKGLGGYISTVVA), 286 to 306 (LNFAAYHLGTALGPSLSGFIV), 314 to 334 (YVFYITSTFWIIYLLYVWLIL), 398 to 418 (VLLAAILISLTLLGAGSMGLL), 435 to 455 (LILSTDSFASSITLVALFPLL), 522 to 542 (VWNAQLGYAIALSAAVLLAVA), 546 to 566 (VALFTAVIIQAISNMVVPCVQ), 583 to 603 (AAFAVFEAVALIIRGPIYAFV), and 614 to 634 (NMIFFLSAVIYGCCFIIIFFM).

The protein localises to the membrane. This is an uncharacterized protein from Schizosaccharomyces pombe (strain 972 / ATCC 24843) (Fission yeast).